Reading from the N-terminus, the 222-residue chain is Ribonuclease 3 (222 aa).

An RNase III domain is found at 5 to 127 (PIKLEKKLKL…LIGAIYLDKG (123 aa)). Position 41 (Glu41) interacts with Mg(2+). Asp45 is an active-site residue. Residues Asp113 and Glu116 each contribute to the Mg(2+) site. Glu116 is a catalytic residue. Residues 152-221 (DAKTKLQEYS…ASLCLQDIFK (70 aa)) enclose the DRBM domain.

It belongs to the ribonuclease III family. In terms of assembly, homodimer. Requires Mg(2+) as cofactor.

It is found in the cytoplasm. The enzyme catalyses Endonucleolytic cleavage to 5'-phosphomonoester.. In terms of biological role, digests double-stranded RNA. Involved in the processing of primary rRNA transcript to yield the immediate precursors to the large and small rRNAs (23S and 16S). Processes some mRNAs, and tRNAs when they are encoded in the rRNA operon. Processes pre-crRNA and tracrRNA of type II CRISPR loci if present in the organism. The protein is Ribonuclease 3 of Pelagibacter ubique (strain HTCC1062).